A 478-amino-acid polypeptide reads, in one-letter code: Transcript termination protein A18 (478 aa).

A Helicase ATP-binding domain is found at 98 to 254 (KLSTHRPMYM…NDVVNVLKVS (157 aa)). Position 111–118 (111–118 (LSCGFGKT)) interacts with ATP. The DESH box motif lies at 204-207 (DESH). Residues 302–468 (PRNNLIVETV…GIEGTKEEPV (167 aa)) form the Helicase C-terminal domain.

The protein belongs to the helicase family. Poxviruses subfamily. Interacts with G2. Might be part of a transcription complex composed at least of G2, A18, and H5.

The protein resides in the virion. DNA helicase which seems to act as a postreplicative transcription termination factor. Involved in ATP-dependent release of nascent RNA. Forms a stable complex with single-stranded DNA, and to a lesser extent RNA. In Rabbit fibroma virus (strain Kasza) (RFV), this protein is Transcript termination protein A18.